The chain runs to 809 residues: Transitional endoplasmic reticulum ATPase homolog 1 (809 aa).

Residues 1–21 form a disordered region; it reads MASVPTHQSEKEKKNDELSTA. A compositionally biased stretch (basic and acidic residues) spans 8–21; it reads QSEKEKKNDELSTA. ATP-binding positions include 253 to 259, Asn354, His390, and 527 to 532; these read PGTGKTL and GCGKTL. The interval 779 to 809 is disordered; that stretch reads FGNNFKFPGEQRGSDAPSAPVPAQDDDDLYN. The tract at residues 803–809 is interaction with ufd-2; sequence DDDDLYN.

It belongs to the AAA ATPase family. CDC48 subfamily. As to quaternary structure, homohexamer; oligomerization is ATP-independent. Forms a ring-shaped particle of 18.3 nm diameter, that displays 6-fold radial symmetry. Interacts with cdc-48.2 and thus may form heterohexamers. Forms a complex composed of cdc-48.1, him-6 and crp-1; within the complex, interacts with helicase him-6 and GTPase crp-1. Forms a complex composed of deubiquitinating enzyme atx-3, adapter ubxn-5 and cdc-48.1; within the complex, interacts (via N-terminus) with ubxn-5 and with atx-3. Forms a complex composed of deubiquitinating enzyme atx-3, E4 ubiquitin-protein ligase ufd-2 and cdc-48.1; within the complex, interacts with atx-3 and (via DDDLYN motif) with ufd-2. Interacts (via N-terminus) with atx-3 (via RRDR motif); the interaction is not required for atx-3 enzymatic activity. Forms a complex composed of cdc-48.1, myosin chaperone unc-45, ubiquitin-protein ligases ufd-2 and chn-1; within the complex, interacts (via DDDLYN motif) with ufd-2 and targets myosin chaperone unc-45 for proteasomal degradation. Forms a complex composed of ubxn-3, ufd-1, npl-4.1 and cdc-48.1; within the complex, interacts (via N-terminus) with ubxn-3 (via FPK motif) and with ufd-1. Forms a complex composed of ubxn-3, cdc-48.1 and/or cdc-48.2 and substrate cdt-1. Interacts (via N-terminus) with ubxn-1. Interacts (via N-terminus) with ubxn-2. Interacts (via N-terminus) with ubxn-4. Interacts with ubxn-6. Interacts with ufd-3. Does not interact with air-2. Expressed in germ cells and spermatheca. Expressed in body wall muscles.

The protein localises to the cytoplasm. The protein resides in the perinuclear region. It catalyses the reaction ATP + H2O = ADP + phosphate + H(+). With respect to regulation, the first ATP-binding region has low ATPase activity. The second ATP-binding region is responsible for ATPase activity. ATP binding to the first ATP-binding region induces intrinsic activity of the second ATP-binding region. While ATP binding to the first ATP-binding region appears to prevent ATP hydrolysis by the second ATP-binding region, ADP-binding to first region promotes the coordinate and cooperative ATPase cycle of the second ATP-binding region. ATP binding to the first ATP-binding region induces a conformational change, promoting the rotation of the first ATP-binding region relative to the second ATP-binding region in the hexamer. Inhibited by N-ethylmaleimide (NEM). ATP-dependent chaperone which probably uses the energy provided by ATP hydrolysis to generate mechanical force to unfold substrate proteins, disassemble protein complexes, and disaggregate protein aggregates. Can also prevent aggregation of unfolded proteins also in an ATP-independent manner. Targets polyubiquitinated proteins for proteasomal degradation by binding to 'Lys-48'-linked polyubiquitin chains. Involved in the cytoplasmic elimination of misfolded proteins exported from the ER. This pathway, known as ERAD, prevents the activation of the unfolded protein response (UPR) caused by the accumulation of misfolded proteins in the ER. In association with helicase him-6 and GTPase crp-1, regulates the unfolded protein response (UPR) following ER stress, probably independently of the ERAD pathway. Together with udf-2 and chn-1, regulates myosin assembly in body wall muscles by targeting myosin chaperone unc-45 for proteasomal degradation. Together with the ufd-1-npl-4 complex, controls the switch from spermatogenesis to oogenesis by regulating E3 ligase cul-2 complex-mediated tra-1 proteasomal degradation. During oocyte meiosis and together with cdc-48.2, required for chromosome condensation at the diakinesis phase in prophase I and for progression of metaphase I. During the first embryonic cell division, regulates DNA replication and thus chromosome segregation and decondensation, and nuclear envelope re-assembly. In S phase and in association with ufd-1, npl-4.1 and/or npl-4.2 and ubxn-3, ensures the degradation of DNA licensing factor cdt-1 after the initiation of DNA replication and thus the disassembly of the DNA replication CMG helicase complex by promoting the dissociation from chromatin of several of its components including cdc-45 and sld-5. Regulates ubxn-3 nuclear localization during S phase. During the first embryonic cell divisions and together with cdc-48.2, regulates the re-assembly of the nuclear envelope after mitosis possibly by inactivating kinase air-2, a component of the chromosomal passenger complex (CPC). However, in another study, cdc-48.1 does not appear to be implicated in the regulation of air-2. This is Transitional endoplasmic reticulum ATPase homolog 1 from Caenorhabditis elegans.